A 194-amino-acid polypeptide reads, in one-letter code: Small ribosomal subunit protein uS7 (194 aa).

Belongs to the universal ribosomal protein uS7 family. Part of the 30S ribosomal subunit.

One of the primary rRNA binding proteins, it binds directly to 16S rRNA where it nucleates assembly of the head domain of the 30S subunit. Is located at the subunit interface close to the decoding center. The sequence is that of Small ribosomal subunit protein uS7 from Methanocorpusculum labreanum (strain ATCC 43576 / DSM 4855 / Z).